The following is a 292-amino-acid chain: High-affinity heme uptake system protein IsdE (292 aa).

An N-terminal signal peptide occupies residues 1–19 (MRIIKYLTILVISVVILTS). A lipid anchor (N-palmitoyl cysteine) is attached at Cys20. The S-diacylglycerol cysteine moiety is linked to residue Cys20. The Fe/B12 periplasmic-binding domain occupies 35–291 (RIVPTTVALT…QLYDLFYKDK (257 aa)). Val41, Ala42, Ser60, Tyr61, Met78, and His229 together coordinate heme.

It belongs to the bacterial solute-binding protein 8 family. Heme b serves as cofactor.

Its subcellular location is the cell membrane. Involved in heme (porphyrin) scavenging. Binds Fe(2+) and Fe(3+) heme but the largest fraction is Fe(2+) heme. Functions as a high-affinity heme binding protein and probably has a role in relaying heme-iron from cell wall-anchored isd proteins receptors to the probable permease IsdF. This chain is High-affinity heme uptake system protein IsdE (isdE), found in Staphylococcus aureus (strain bovine RF122 / ET3-1).